The chain runs to 202 residues: MRYWYLRLAVFLGALAMPAWWLYQAWIFALGPDPGKTLVDRLGLGALVLLLLTLAMTPLQKLSGWPGWIAVRRQLGLWCFTYALLHLSAYCVFILGLDWGQLGIELSKRPYIIVGMLGFICLFLLAITSNRFAMRKLGSRWKKLHRLVYLILGLGLLHMLWVVRADLEEWTLYAVVGASLMLLRLPSIARRLPRLRGRPGVS.

A run of 6 helical transmembrane segments spans residues 8–28 (LAVF…AWIF), 42–62 (LGLG…LQKL), 75–95 (LGLW…VFIL), 110–130 (PYII…ITSN), 147–167 (LVYL…RADL), and 169–189 (EWTL…PSIA).

Belongs to the MsrQ family. In terms of assembly, heterodimer of a catalytic subunit (MsrP) and a heme-binding subunit (MsrQ). FMN serves as cofactor. It depends on heme b as a cofactor.

The protein resides in the cell inner membrane. Its function is as follows. Part of the MsrPQ system that repairs oxidized periplasmic proteins containing methionine sulfoxide residues (Met-O), using respiratory chain electrons. Thus protects these proteins from oxidative-stress damage caused by reactive species of oxygen and chlorine generated by the host defense mechanisms. MsrPQ is essential for the maintenance of envelope integrity under bleach stress, rescuing a wide series of structurally unrelated periplasmic proteins from methionine oxidation. MsrQ provides electrons for reduction to the reductase catalytic subunit MsrP, using the quinone pool of the respiratory chain. The protein is Protein-methionine-sulfoxide reductase heme-binding subunit MsrQ of Pseudomonas paraeruginosa (strain DSM 24068 / PA7) (Pseudomonas aeruginosa (strain PA7)).